The sequence spans 299 residues: Glutamyl-Q tRNA(Asp) synthetase (299 aa).

L-glutamate is bound by residues 18-22 (RFAPS) and glutamate 54. Positions 21 to 31 (PSPSGALHFGS) match the 'HIGH' region motif. Positions 110, 112, 124, and 128 each coordinate Zn(2+). L-glutamate-binding residues include tyrosine 181 and arginine 199. Positions 237-241 (KLSKQ) match the 'KMSKS' region motif. Lysine 240 is a binding site for ATP.

The protein belongs to the class-I aminoacyl-tRNA synthetase family. GluQ subfamily. Requires Zn(2+) as cofactor.

Catalyzes the tRNA-independent activation of glutamate in presence of ATP and the subsequent transfer of glutamate onto a tRNA(Asp). Glutamate is transferred on the 2-amino-5-(4,5-dihydroxy-2-cyclopenten-1-yl) moiety of the queuosine in the wobble position of the QUC anticodon. This chain is Glutamyl-Q tRNA(Asp) synthetase, found in Shewanella oneidensis (strain ATCC 700550 / JCM 31522 / CIP 106686 / LMG 19005 / NCIMB 14063 / MR-1).